The sequence spans 149 residues: Ribosomal RNA large subunit methyltransferase H (149 aa).

S-adenosyl-L-methionine contacts are provided by residues L71, G98, and L117–L122.

It belongs to the RNA methyltransferase RlmH family. Homodimer.

The protein localises to the cytoplasm. The catalysed reaction is pseudouridine(1915) in 23S rRNA + S-adenosyl-L-methionine = N(3)-methylpseudouridine(1915) in 23S rRNA + S-adenosyl-L-homocysteine + H(+). Functionally, specifically methylates the pseudouridine at position 1915 (m3Psi1915) in 23S rRNA. The polypeptide is Ribosomal RNA large subunit methyltransferase H (Campylobacter jejuni subsp. jejuni serotype O:6 (strain 81116 / NCTC 11828)).